The primary structure comprises 327 residues: tRNA uridine(34) hydroxylase (327 aa).

Residues 130 to 224 (LDEDTVVLDT…YGKDPEVQGE (95 aa)) enclose the Rhodanese domain. Cysteine 184 acts as the Cysteine persulfide intermediate in catalysis.

It belongs to the TrhO family.

It carries out the reaction uridine(34) in tRNA + AH2 + O2 = 5-hydroxyuridine(34) in tRNA + A + H2O. Functionally, catalyzes oxygen-dependent 5-hydroxyuridine (ho5U) modification at position 34 in tRNAs. This is tRNA uridine(34) hydroxylase from Streptococcus thermophilus (strain ATCC BAA-491 / LMD-9).